We begin with the raw amino-acid sequence, 356 residues long: L-Ala-D/L-Glu epimerase (356 aa).

161–163 is a substrate binding site; it reads KVK. The Mg(2+) site is built by Asp191, Glu219, and Asp244. Substrate is bound by residues Lys268 and 320–322; that span reads DLD.

This sequence belongs to the mandelate racemase/muconate lactonizing enzyme family. The cofactor is Mg(2+).

It carries out the reaction L-alanyl-L-glutamate = L-alanyl-D-glutamate. In terms of biological role, dipeptide epimerase with a preference for substrates containing a Glu residue in the second position. Catalyzes the epimerization of L-Ala-L-Glu, L-Ser-L-Glu, L-Thr-L-Glu, L-Val-L-Glu, L-Gly-L-Glu and L-Thr-L-Glu (in vitro). May play a role in the metabolism of the murein peptide, of which L-Ala-D-Glu is a component. This Francisella tularensis subsp. novicida (strain U112) protein is L-Ala-D/L-Glu epimerase.